A 229-amino-acid chain; its full sequence is Acetylornithine aminotransferase (229 aa).

Residues 95–96 (GA) and phenylalanine 122 each bind pyridoxal 5'-phosphate. Residue arginine 125 participates in N(2)-acetyl-L-ornithine binding. Residue 208-211 (DEIQ) participates in pyridoxal 5'-phosphate binding.

The protein belongs to the class-III pyridoxal-phosphate-dependent aminotransferase family. ArgD subfamily. In terms of assembly, homodimer. Pyridoxal 5'-phosphate serves as cofactor.

The protein resides in the cytoplasm. It catalyses the reaction N(2)-acetyl-L-ornithine + 2-oxoglutarate = N-acetyl-L-glutamate 5-semialdehyde + L-glutamate. Its pathway is amino-acid biosynthesis; L-arginine biosynthesis; N(2)-acetyl-L-ornithine from L-glutamate: step 4/4. This Bacillus amyloliquefaciens (Bacillus velezensis) protein is Acetylornithine aminotransferase (argD).